The primary structure comprises 146 residues: Angiogenin (146 aa).

Positions 1-24 are cleaved as a signal peptide; it reads MVMGPHLLLLVFILGLGLTPPTLA. Gln25 is modified (pyrrolidone carboxylic acid). The active-site Proton acceptor is His37. Intrachain disulfides connect Cys50-Cys105, Cys63-Cys116, and Cys81-Cys131. Positions 55–59 match the Nucleolar localization signal motif; sequence RLRNM. Positions 105 and 127 each coordinate tRNA. Catalysis depends on His138, which acts as the Proton donor.

It belongs to the pancreatic ribonuclease family. Homodimer. Interacts with RNH1; inhibiting ANG ribonuclease activity. Interacts with PCNA.

Its subcellular location is the secreted. It localises to the nucleus. It is found in the nucleolus. The protein localises to the cytoplasm. The protein resides in the stress granule. Its activity is regulated as follows. Has weak tRNA ribonuclease activity by itself due to partial autoinhibition by its C-terminus, which folds into a short alpha-helix that partially occludes the substrate-binding site. In absence of stress, the ribonuclease activity is inhibited by RNH1 in the cytoplasm. In response to stress, dissociates from RNH1 in the cytoplasm and associates with cytoplasmic ribosomes with vacant A-sites: ribosomes directly activate the tRNA ribonuclease activity of ANG by refolding the C-terminal alpha-helix. In response to stress, the angiogenic activity of ANG is inhibited by RNH1 in the nucleus. In terms of biological role, secreted ribonuclease that can either promote or restrict cell proliferation of target cells, depending on the context. Endocytosed in target cells via its receptor PLXNB2 and translocates to the cytoplasm or nucleus. Under stress conditions, localizes to the cytoplasm and promotes the assembly of stress granules (SGs): specifically cleaves a subset of tRNAs within anticodon loops to produce tRNA-derived stress-induced fragments (tiRNAs), resulting in translation repression and inhibition of cell proliferation. tiRNas also prevent formation of apoptosome, thereby promoting cell survival. Preferentially cleaves RNAs between a pyrimidine and an adenosine residue, suggesting that it cleaves the anticodon loop of tRNA(Ala) (32-UUAGCAU-38) after positions 33 and 36. Cleaves a subset of tRNAs, including tRNA(Ala), tRNA(Glu), tRNA(Gly), tRNA(Lys), tRNA(Val), tRNA(His), tRNA(Asp) and tRNA(Sec). Under growth conditions and in differentiated cells, translocates to the nucleus and stimulates ribosomal RNA (rRNA) transcription, including that containing the initiation site sequences of 45S rRNA, thereby promoting cell growth and proliferation. Angiogenin induces vascularization of normal and malignant tissues via its ability to promote rRNA transcription. Involved in hematopoietic stem and progenitor cell (HSPC) growth and survival by promoting rRNA transcription in growth conditions and inhibiting translation in response to stress, respectively. Mediates the crosstalk between myeloid and intestinal epithelial cells to protect the intestinal epithelial barrier integrity: secreted by myeloid cells and promotes intestinal epithelial cells proliferation and survival. Also mediates osteoclast-endothelial cell crosstalk in growing bone: produced by osteoclasts and protects the neighboring vascular cells against senescence by promoting rRNA transcription. The chain is Angiogenin (ANG) from Saimiri sciureus (Common squirrel monkey).